Here is a 538-residue protein sequence, read N- to C-terminus: Chaperonin GroEL (538 aa).

ATP is bound by residues 29–32 (TLGP), 86–90 (DGTTT), Gly413, 477–479 (NAA), and Asp493.

The protein belongs to the chaperonin (HSP60) family. Forms a cylinder of 14 subunits composed of two heptameric rings stacked back-to-back. Interacts with the co-chaperonin GroES.

The protein localises to the cytoplasm. It catalyses the reaction ATP + H2O + a folded polypeptide = ADP + phosphate + an unfolded polypeptide.. Its function is as follows. Together with its co-chaperonin GroES, plays an essential role in assisting protein folding. The GroEL-GroES system forms a nano-cage that allows encapsulation of the non-native substrate proteins and provides a physical environment optimized to promote and accelerate protein folding. The protein is Chaperonin GroEL of Scardovia inopinata (Bifidobacterium inopinatum).